We begin with the raw amino-acid sequence, 469 residues long: Cysteine--tRNA ligase (469 aa).

Cysteine 33 is a binding site for Zn(2+). Residues 35–45 (ATVQGLPHIGH) carry the 'HIGH' region motif. Positions 211, 236, and 240 each coordinate Zn(2+). A 'KMSKS' region motif is present at residues 267–271 (KMSKS). Lysine 270 contacts ATP.

Belongs to the class-I aminoacyl-tRNA synthetase family. Monomer. Zn(2+) is required as a cofactor.

It is found in the cytoplasm. It carries out the reaction tRNA(Cys) + L-cysteine + ATP = L-cysteinyl-tRNA(Cys) + AMP + diphosphate. The polypeptide is Cysteine--tRNA ligase (cysS) (Mycobacterium tuberculosis (strain CDC 1551 / Oshkosh)).